The primary structure comprises 354 residues: Guanine nucleotide-binding protein G(t) subunit alpha-2 (354 aa).

The tract at residues methionine 1–alanine 27 is disordered. A lipid anchor (N-myristoyl glycine) is attached at glycine 2. Basic and acidic residues predominate over residues alanine 7–alanine 27. The G-alpha domain occupies lysine 32–phenylalanine 354. Residues lysine 35 to threonine 48 form a G1 motif region. GTP-binding positions include glycine 40–serine 47, leucine 175–threonine 181, aspartate 200–glutamine 204, asparagine 269–aspartate 272, and alanine 326. Serine 47 provides a ligand contact to Mg(2+). The G2 motif stretch occupies residues aspartate 173–threonine 181. Arginine 178 is modified (ADP-ribosylarginine; by cholera toxin). A Mg(2+)-binding site is contributed by threonine 181. Positions phenylalanine 196–arginine 205 are G3 motif. The tract at residues valine 265–aspartate 272 is G4 motif. The interval threonine 324 to threonine 329 is G5 motif. An ADP-ribosylcysteine; by pertussis toxin modification is found at cysteine 351.

Belongs to the G-alpha family. G(i/o/t/z) subfamily. G proteins are composed of 3 units; alpha, beta and gamma. The alpha chain contains the guanine nucleotide binding site. As to expression, retinal rod outer segment.

The protein resides in the cell projection. Its subcellular location is the cilium. It is found in the photoreceptor outer segment. It localises to the photoreceptor inner segment. In terms of biological role, guanine nucleotide-binding proteins (G proteins) are involved as modulators or transducers in various transmembrane signaling systems. Transducin is an amplifier and one of the transducers of a visual impulse that performs the coupling between rhodopsin and cGMP-phosphodiesterase. This chain is Guanine nucleotide-binding protein G(t) subunit alpha-2 (GNAT2), found in Homo sapiens (Human).